A 395-amino-acid polypeptide reads, in one-letter code: Elongation factor Tu (395 aa).

The region spanning 6–205 (KPHINVGTIG…NALEKISLPT (200 aa)) is the tr-type G domain. Residues 15–22 (GHVDHGKT) form a G1 region. 15–22 (GHVDHGKT) serves as a coordination point for GTP. T22 serves as a coordination point for Mg(2+). Positions 59–63 (GITIS) are G2. The interval 80–83 (DCPG) is G3. GTP contacts are provided by residues 80 to 84 (DCPGH) and 135 to 138 (NKCD). The G4 stretch occupies residues 135 to 138 (NKCD). A G5 region spans residues 173–175 (SAV).

Belongs to the TRAFAC class translation factor GTPase superfamily. Classic translation factor GTPase family. EF-Tu/EF-1A subfamily. In terms of assembly, monomer.

The protein resides in the cytoplasm. It carries out the reaction GTP + H2O = GDP + phosphate + H(+). Functionally, GTP hydrolase that promotes the GTP-dependent binding of aminoacyl-tRNA to the A-site of ribosomes during protein biosynthesis. The chain is Elongation factor Tu from Ehrlichia chaffeensis (strain ATCC CRL-10679 / Arkansas).